Reading from the N-terminus, the 371-residue chain is Peptide chain release factor 2 (371 aa).

Gln252 bears the N5-methylglutamine mark.

Belongs to the prokaryotic/mitochondrial release factor family. Post-translationally, methylated by PrmC. Methylation increases the termination efficiency of RF2.

The protein resides in the cytoplasm. Peptide chain release factor 2 directs the termination of translation in response to the peptide chain termination codons UGA and UAA. This chain is Peptide chain release factor 2, found in Staphylococcus haemolyticus (strain JCSC1435).